Reading from the N-terminus, the 322-residue chain is Beta-carotene 3-hydroxylase, chloroplastic (322 aa).

The transit peptide at 1–68 directs the protein to the chloroplast; sequence TFHKPVSGAS…AQRCSLVRLR (68 aa). Transmembrane regions (helical) follow at residues 118 to 138 and 149 to 169; these read QAAAIAASIGVSGIAIFATYL and AVPWGEVAGTLLLVVGGALGM. The Fatty acid hydroxylase domain occupies 164–286; the sequence is GGALGMEMYA…AHQLHHSGKY (123 aa). The Histidine box-1 signature appears at 177–182; sequence HKAIWH. The short motif at 191 to 195 is the Histidine box-2 element; the sequence is HKSHH. 2 helical membrane-spanning segments follow: residues 207-227 and 231-251; these read LFAIINGLPAMLLCTFGFWLP and GAACFGAGLGITLYGMAYMFV. The short motif at 252 to 257 is the Histidine box-3 element; the sequence is HDGLVH. The short motif at 278 to 282 is the Histidine box-4 element; sequence HQLHH.

It belongs to the sterol desaturase family.

The protein resides in the plastid. The protein localises to the chloroplast membrane. The enzyme catalyses all-trans-beta-carotene + 4 reduced [2Fe-2S]-[ferredoxin] + 2 O2 + 4 H(+) = all-trans-zeaxanthin + 4 oxidized [2Fe-2S]-[ferredoxin] + 2 H2O. Its function is as follows. Nonheme diiron monooxygenase involved in the biosynthesis of astaxanthin. Hydroxylates beta-ring of beta-carotene and catalyzes the conversion of canthaxanthin to astaxanthin. Uses ferredoxin as an electron donor. This chain is Beta-carotene 3-hydroxylase, chloroplastic (CRTZ), found in Haematococcus lacustris (Green alga).